The chain runs to 315 residues: Prephenate dehydratase (315 aa).

In terms of domain architecture, Prephenate dehydratase spans 3 to 190 (RIAYLGPQGT…ARTRFVLVGR (188 aa)). The ACT domain maps to 204–281 (SVALRLPNTP…EDVRYLGSWP (78 aa)).

Homodimer.

It catalyses the reaction prephenate + H(+) = 3-phenylpyruvate + CO2 + H2O. It participates in amino-acid biosynthesis; L-phenylalanine biosynthesis; phenylpyruvate from prephenate: step 1/1. The polypeptide is Prephenate dehydratase (pheA) (Mycobacterium sp. (strain KMS)).